The following is a 142-amino-acid chain: MEITNVNHICFSVSDLNTSIQFYKDILHGDLLVSGRTTAYLTIGHTWIALNQEKNIPRNEISHSYTHVAFSIDEEDFQQWIQWLKENQVNILKGRPRDIKDKKSIYFTDLDGHKIELHTGTLKDRMEYYKCEKTHMQFYDEF.

Residues 5 to 120 (NVNHICFSVS…DGHKIELHTG (116 aa)) form the VOC domain. Mg(2+)-binding residues include His8, His67, and Glu116. Catalysis depends on Glu116, which acts as the Proton donor/acceptor.

Belongs to the fosfomycin resistance protein family. FosB subfamily. Homodimer. Requires Mg(2+) as cofactor.

The protein resides in the cytoplasm. Metallothiol transferase which confers resistance to fosfomycin by catalyzing the addition of a thiol cofactor to fosfomycin. L-cysteine is probably the physiological thiol donor. This Staphylococcus epidermidis (strain ATCC 35984 / DSM 28319 / BCRC 17069 / CCUG 31568 / BM 3577 / RP62A) protein is Metallothiol transferase FosB.